Consider the following 208-residue polypeptide: Probable GTP-binding protein EngB (208 aa).

The EngB-type G domain occupies 25–199 (TGIEVAFAGR…RQKLDSWYNG (175 aa)). GTP contacts are provided by residues 33-40 (GRSNAGKS), 60-64 (GRTQL), 78-81 (DLPG), 145-148 (TKSD), and 178-180 (FSS). The Mg(2+) site is built by Ser40 and Thr62.

It belongs to the TRAFAC class TrmE-Era-EngA-EngB-Septin-like GTPase superfamily. EngB GTPase family. Mg(2+) serves as cofactor.

Necessary for normal cell division and for the maintenance of normal septation. The chain is Probable GTP-binding protein EngB from Enterobacter sp. (strain 638).